We begin with the raw amino-acid sequence, 585 residues long: Cytochrome P450 monooxygenase AOL_s00215g278 (585 aa).

Cys-518 provides a ligand contact to heme.

Belongs to the cytochrome P450 family. It depends on heme as a cofactor.

It participates in secondary metabolite biosynthesis; terpenoid biosynthesis. Functionally, cytochrome P450 monooxygenase; part of the gene cluster that mediates the biosynthesis of sesquiterpenyl epoxy-cyclohexenoids (SECs) such as anthrobotrisins and arthrosporols, metabolites that possess a novel hybrid carbon skeleton consisting of a polyketide-derived epoxycyclohexenol combined with a terpenoid-derived monocyclic sesquiterpenol substructure (PKS-PTS hybrid). The SEC pathway plays an important role for fungal soil colonization via decreasing fungal nematode-capturing ability. Within the pathway, the cytochrome P450 monooxygenase AOL_s00215g278 plays a role in the oxygenation of the phenol moiety, most likely in the epoxy formation. The pathway begins with the biosynthesis of 6-methylsalicylic acid (6-MSA), the first precursor of the polyketide-derived epoxycyclohexenol in arthrosporols, by the polyketide synthase (PKS) AOL_s00215g283 via condensation of 1 acetate and 3 malonate units. The 6-methylsalicylic acid decarboxylase AOL_s00215g281 then catalyzes the decarboxylation of 6-methylsalicylic acid to yield m-cresol. The cytochrome P450 monooxygenase AOL_s00215g282 further oxidizes m-cresol to yield toluquinol. With the assistance of the oxidoreductase AOL_s00215g277, the polyprenyl transferase AOL_s00215g276 catalyzes the farnesylation of toluquinol to produce farnesyl hydroquinone, the hybrid precursor for biosynthesis of SECs. Farnesyl hydroquinone undergoes epoxidation and then subsequent dehydrogenation to form farnesyl epoxy-quinone, the first and simplest SEC. The cytochrome P450 monooxygenase AOL_s00215g278 and the FAD-dependent monooxygenase AOL_s00215g279 might be involved in the oxygenation of the phenol moiety, most likely in the epoxy formation. The cytochrome P450 monooxygenases AOL_s00215g274 and AOL_s00215g280 are involved in specific regional ketone reductions at respectively C-4 and C-1 of farnesyl epoxy-quinone PubMed:33823587. This Arthrobotrys oligospora (strain ATCC 24927 / CBS 115.81 / DSM 1491) (Nematode-trapping fungus) protein is Cytochrome P450 monooxygenase AOL_s00215g278.